The primary structure comprises 172 residues: Bifunctional protein PyrR (172 aa).

Substrate-binding positions include Thr36–Gly37, Arg77, Asp94–Thr102, and Val151. The PRPP-binding motif lies at Leu90–Thr102.

It belongs to the purine/pyrimidine phosphoribosyltransferase family. PyrR subfamily.

It carries out the reaction UMP + diphosphate = 5-phospho-alpha-D-ribose 1-diphosphate + uracil. In terms of biological role, regulates the transcription of the pyrimidine nucleotide (pyr) operon in response to exogenous pyrimidines. Also displays a weak uracil phosphoribosyltransferase activity which is not physiologically significant. The polypeptide is Bifunctional protein PyrR (Pseudomonas putida (Arthrobacter siderocapsulatus)).